A 275-amino-acid chain; its full sequence is Light-independent protochlorophyllide reductase iron-sulfur ATP-binding protein (275 aa).

ATP-binding positions include Gly-12–Thr-17 and Lys-41. Ser-16 lines the Mg(2+) pocket. [4Fe-4S] cluster-binding residues include Cys-97 and Cys-131. ATP is bound at residue Asn-182 to Arg-183.

The protein belongs to the NifH/BchL/ChlL family. Homodimer. Protochlorophyllide reductase is composed of three subunits; BchL, BchN and BchB. The cofactor is [4Fe-4S] cluster.

The catalysed reaction is chlorophyllide a + oxidized 2[4Fe-4S]-[ferredoxin] + 2 ADP + 2 phosphate = protochlorophyllide a + reduced 2[4Fe-4S]-[ferredoxin] + 2 ATP + 2 H2O. Its pathway is porphyrin-containing compound metabolism; bacteriochlorophyll biosynthesis (light-independent). In terms of biological role, component of the dark-operative protochlorophyllide reductase (DPOR) that uses Mg-ATP and reduced ferredoxin to reduce ring D of protochlorophyllide (Pchlide) to form chlorophyllide a (Chlide). This reaction is light-independent. The L component serves as a unique electron donor to the NB-component of the complex, and binds Mg-ATP. This chain is Light-independent protochlorophyllide reductase iron-sulfur ATP-binding protein, found in Pelodictyon phaeoclathratiforme (strain DSM 5477 / BU-1).